A 351-amino-acid chain; its full sequence is MAANTTSPAAPSSPGGMSLSLLPIVLLSVALAVGLPGNSFVVWSILKRMQKRTVTALLVLNLALADLAVLLTAPFFLHFLARGTWSFREMGCRLCHYVCGISMYASVLLITIMSLDRSLAVARPFMSQKVRTKAFARWVLAGIWVVSFLLAIPVLVYRTVKWNNRTLICAPNYPNKEHKVFHLLFEAITGFLLPFLAVVASYSDIGRRLQARRFRRSRRTGRLVVLIILAFAAFWLPYHLVNLVEAGRTVAGWDKNSPAGQRLRLARYVLIALAFLSSSVNPVLYACAGGGLLRSAGVGFVVKLLEGTGSEVSSTRRGGTLVQTPKDTPACPEPGPTDSFMTSSTIPESSK.

The Extracellular portion of the chain corresponds to 1–21 (MAANTTSPAAPSSPGGMSLSL). Asn4 carries an N-linked (GlcNAc...) asparagine glycan. Residues 22–44 (LPIVLLSVALAVGLPGNSFVVWS) traverse the membrane as a helical segment. At 45 to 56 (ILKRMQKRTVTA) the chain is on the cytoplasmic side. The helical transmembrane segment at 57–77 (LLVLNLALADLAVLLTAPFFL) threads the bilayer. At 78–93 (HFLARGTWSFREMGCR) the chain is on the extracellular side. A helical membrane pass occupies residues 94 to 115 (LCHYVCGISMYASVLLITIMSL). Topologically, residues 116–140 (DRSLAVARPFMSQKVRTKAFARWVL) are cytoplasmic. A helical membrane pass occupies residues 141 to 161 (AGIWVVSFLLAIPVLVYRTVK). The Extracellular portion of the chain corresponds to 162–179 (WNNRTLICAPNYPNKEHK). Residue Asn164 is glycosylated (N-linked (GlcNAc...) asparagine). A helical transmembrane segment spans residues 180-200 (VFHLLFEAITGFLLPFLAVVA). The Cytoplasmic segment spans residues 201-222 (SYSDIGRRLQARRFRRSRRTGR). The chain crosses the membrane as a helical span at residues 223-243 (LVVLIILAFAAFWLPYHLVNL). Over 244–268 (VEAGRTVAGWDKNSPAGQRLRLARY) the chain is Extracellular. A helical membrane pass occupies residues 269-289 (VLIALAFLSSSVNPVLYACAG). The Cytoplasmic segment spans residues 290-351 (GGLLRSAGVG…TSSTIPESSK (62 aa)). Composition is skewed to polar residues over residues 311-326 (EVSS…QTPK) and 339-351 (SFMT…ESSK). The interval 311–351 (EVSSTRRGGTLVQTPKDTPACPEPGPTDSFMTSSTIPESSK) is disordered.

Belongs to the G-protein coupled receptor 1 family. Phosphorylated by GRK6 upon leukotriene B4 binding; which promotes desensitization. In terms of tissue distribution, highly expressed on activated leukocytes, including eosinophils.

The protein localises to the cell membrane. In terms of biological role, receptor for leukotriene B4, a potent chemoattractant involved in inflammation and immune response. This chain is Leukotriene B4 receptor 1 (Ltb4r), found in Mus musculus (Mouse).